Here is a 419-residue protein sequence, read N- to C-terminus: Capsule polysaccharide modification protein LipB (419 aa).

Its subcellular location is the cell inner membrane. Functionally, involved in the phospholipid modification of the capsular polysaccharide, a strong requirement for its translocation to the cell surface. This is Capsule polysaccharide modification protein LipB (lipB) from Neisseria meningitidis serogroup A / serotype 4A (strain DSM 15465 / Z2491).